We begin with the raw amino-acid sequence, 201 residues long: Protein GrpE (201 aa).

Residues 1–11 (MTDSTNNQGTS) show a composition bias toward polar residues. The interval 1–40 (MTDSTNNQGTSGRPDDDHTTEEVASVFNDPGAQAPAGEPD) is disordered.

The protein belongs to the GrpE family. In terms of assembly, homodimer.

Its subcellular location is the cytoplasm. Participates actively in the response to hyperosmotic and heat shock by preventing the aggregation of stress-denatured proteins, in association with DnaK and GrpE. It is the nucleotide exchange factor for DnaK and may function as a thermosensor. Unfolded proteins bind initially to DnaJ; upon interaction with the DnaJ-bound protein, DnaK hydrolyzes its bound ATP, resulting in the formation of a stable complex. GrpE releases ADP from DnaK; ATP binding to DnaK triggers the release of the substrate protein, thus completing the reaction cycle. Several rounds of ATP-dependent interactions between DnaJ, DnaK and GrpE are required for fully efficient folding. This Beijerinckia indica subsp. indica (strain ATCC 9039 / DSM 1715 / NCIMB 8712) protein is Protein GrpE.